Here is a 78-residue protein sequence, read N- to C-terminus: DNA-directed RNA polymerase subunit omega (78 aa).

It belongs to the RNA polymerase subunit omega family. In cyanobacteria the RNAP catalytic core is composed of 2 alpha, 1 beta, 1 beta', 1 gamma and 1 omega subunit. When a sigma factor is associated with the core the holoenzyme is formed, which can initiate transcription.

It catalyses the reaction RNA(n) + a ribonucleoside 5'-triphosphate = RNA(n+1) + diphosphate. Promotes RNA polymerase assembly. Latches the N- and C-terminal regions of the beta' subunit thereby facilitating its interaction with the beta and alpha subunits. This chain is DNA-directed RNA polymerase subunit omega, found in Prochlorococcus marinus (strain MIT 9312).